The following is a 689-amino-acid chain: 7SK snRNA methylphosphate capping enzyme (689 aa).

Methionine 1 carries the post-translational modification N-acetylmethionine. Basic and acidic residues predominate over residues 1–10 (MIEMAAEKEP). The disordered stretch occupies residues 1 to 167 (MIEMAAEKEP…GGGGFKHPAF (167 aa)). A compositionally biased stretch (low complexity) spans 52-84 (GRCAPSAGSPAAAVGRESPGAAATSSSGPQAQQ). 4 positions are modified to phosphoserine: serine 57, serine 60, serine 69, and serine 101. Position 117 is an omega-N-methylarginine (arginine 117). Serine 152, serine 175, and serine 179 each carry phosphoserine. Phosphothreonine is present on threonine 213. Serine 216, serine 217, and serine 254 each carry phosphoserine. A compositionally biased stretch (basic residues) spans 258-269 (TGRKRHRHRGQH). A disordered region spans residues 258–314 (TGRKRHRHRGQHHQQQQAAGGSESHPVPPTAPLTPLLHGEGASQQPRHRGQNRDAPQ). A Phosphothreonine modification is found at threonine 291. 2 positions are modified to phosphoserine: serine 330 and serine 344. The segment at 332-407 (LPSALQGPSG…HHPLPAAGFK (76 aa)) is disordered. The segment covering 338-359 (GPSGSLSAPPAASVISAPPSSS) has biased composition (low complexity). Basic residues predominate over residues 360–369 (SRHRKRRRTS). Serine 390 bears the Phosphoserine mark. S-adenosyl-L-methionine is bound by residues tyrosine 422, arginine 433, 451–453 (GCN), 474–475 (DI), 559–560 (NY), and leucine 581. The Bin3-type SAM domain maps to 431-686 (DGRLRVLKPE…PVYLFHKARS (256 aa)). Lysine 643 is covalently cross-linked (Glycyl lysine isopeptide (Lys-Gly) (interchain with G-Cter in SUMO2)).

It belongs to the methyltransferase superfamily. Core component of the 7SK RNP complex, at least composed of 7SK RNA, LARP7, MEPCE, HEXIM1 (or HEXIM2) and P-TEFb (composed of CDK9 and CCNT1/cyclin-T1). Interacts with METTL16. Interacts with RBM7; upon genotoxic stress this interaction is enhanced, triggering the release of inactive P-TEFb complex from the core, yielding to P-TEFb complex activation. Post-translationally, dephosphorylated at Ser-152 by the PNUTS-PP1 complex, promoting RNA polymerase II transcription pause-release. As to expression, expressed in chronic myeloid leukemia cells, adrenal gland, brain, cerebellum, kidney, lung, mammary gland and testis. Weakly or not expressed in other tissues.

The protein resides in the nucleus. The enzyme catalyses a 5'-end triphospho-guanosine-ribonucleotide-snRNA + S-adenosyl-L-methionine = a 5'-end methyltriphosphate-guanosine-ribonucleotide-snRNA + S-adenosyl-L-homocysteine. Its function is as follows. S-adenosyl-L-methionine-dependent methyltransferase that adds a methylphosphate cap at the 5'-end of 7SK snRNA (7SK RNA), leading to stabilize it. Also has a non-enzymatic function as part of the 7SK RNP complex: the 7SK RNP complex sequesters the positive transcription elongation factor b (P-TEFb) in a large inactive 7SK RNP complex preventing RNA polymerase II phosphorylation and subsequent transcriptional elongation. The 7SK RNP complex also promotes snRNA gene transcription by RNA polymerase II via interaction with the little elongation complex (LEC). In the 7SK RNP complex, MEPCE is required to stabilize 7SK RNA and facilitate the assembly of 7SK RNP complex. MEPCE has a non-enzymatic function in the 7SK RNP complex; interaction with LARP7 within the 7SK RNP complex occluding its catalytic center. Also required for stability of U6 snRNAs. The sequence is that of 7SK snRNA methylphosphate capping enzyme from Homo sapiens (Human).